The following is a 473-amino-acid chain: ATP synthase subunit beta, chloroplastic (473 aa).

Residue 172 to 179 (GGAGVGKT) coordinates ATP.

This sequence belongs to the ATPase alpha/beta chains family. As to quaternary structure, F-type ATPases have 2 components, CF(1) - the catalytic core - and CF(0) - the membrane proton channel. CF(1) has five subunits: alpha(3), beta(3), gamma(1), delta(1), epsilon(1). CF(0) has four main subunits: a(1), b(1), b'(1) and c(9-12).

The protein resides in the plastid. Its subcellular location is the chloroplast thylakoid membrane. It catalyses the reaction ATP + H2O + 4 H(+)(in) = ADP + phosphate + 5 H(+)(out). Functionally, produces ATP from ADP in the presence of a proton gradient across the membrane. The catalytic sites are hosted primarily by the beta subunits. In Equisetum arvense (Field horsetail), this protein is ATP synthase subunit beta, chloroplastic.